The sequence spans 247 residues: tRNA pseudouridine synthase A (247 aa).

Asp53 functions as the Nucleophile in the catalytic mechanism. Tyr111 is a binding site for substrate.

This sequence belongs to the tRNA pseudouridine synthase TruA family. In terms of assembly, homodimer.

It carries out the reaction uridine(38/39/40) in tRNA = pseudouridine(38/39/40) in tRNA. In terms of biological role, formation of pseudouridine at positions 38, 39 and 40 in the anticodon stem and loop of transfer RNAs. The polypeptide is tRNA pseudouridine synthase A (Lacticaseibacillus casei (strain BL23) (Lactobacillus casei)).